A 441-amino-acid chain; its full sequence is MSIDIDWERATSGPDGELLAERIRSFIHDKFQQMVLPRFIRSVQVTSFNFGTIPPELEIRDLTDPFPDFYEDGDEDLSVSSEEQSPMREQADRYRERIDSWQANSPGGLEVQMSGRMGFGHPLQLAPDEDGSRLHPLRSPINLGDINPYLFPRSGTPGIPGGTSNLGYFMPLSGLSGSQTPLRAVTRGNPFSGGWPDSPLENESRIGHGQGPPRRRSEVNVDAIQSRPSTANTGNTLFSRGSVSTGDPRHSHSSQTVLANNPGQAPEANDSPVSAVPPLSGTPPRRMREQKAEDFQVFCRTKYAGNISLSLTAEILLDYPMPSFVGLPLKLNITGLTFDAVAVLAYIRRRIHFCFLSPEDAYALIGPETGGGGGDTMEPNSLRRKNLSLLRKIRVESEIGRKENGKQALKNVGKVEKFVLEQVRRIFEEEFVYPSFWTFLV.

Residues 1 to 441 enclose the SMP-LTD domain; the sequence is MSIDIDWERA…VYPSFWTFLV (441 aa). Residues 180–289 are disordered; it reads TPLRAVTRGN…SGTPPRRMRE (110 aa). 2 stretches are compositionally biased toward polar residues: residues 226-245 and 253-263; these read SRPS…SVST and SSQTVLANNPG.

This sequence belongs to the MDM12 family. Component of the ER-mitochondria encounter structure (ERMES) or MDM complex, composed of MMM1, MDM10, MDM12 and MDM34. An MMM1 homodimer associates with one molecule of MDM12 on each side in a pairwise head-to-tail manner, and the SMP-LTD domains of MMM1 and MDM12 generate a continuous hydrophobic tunnel for phospholipid trafficking.

It is found in the mitochondrion outer membrane. The protein resides in the endoplasmic reticulum membrane. Component of the ERMES/MDM complex, which serves as a molecular tether to connect the endoplasmic reticulum (ER) and mitochondria. Components of this complex are involved in the control of mitochondrial shape and protein biogenesis, and function in nonvesicular lipid trafficking between the ER and mitochondria. MDM12 is required for the interaction of the ER-resident membrane protein MMM1 and the outer mitochondrial membrane-resident beta-barrel protein MDM10. The MDM12-MMM1 subcomplex functions in the major beta-barrel assembly pathway that is responsible for biogenesis of all mitochondrial outer membrane beta-barrel proteins, and acts in a late step after the SAM complex. The MDM10-MDM12-MMM1 subcomplex further acts in the TOM40-specific pathway after the action of the MDM12-MMM1 complex. Essential for establishing and maintaining the structure of mitochondria and maintenance of mtDNA nucleoids. The protein is Mitochondrial distribution and morphology protein 12 of Paracoccidioides brasiliensis (strain Pb18).